The following is a 654-amino-acid chain: Pentatricopeptide repeat-containing protein At4g19191, mitochondrial (654 aa).

The transit peptide at 1–65 (MSLIHRRLYR…PFVAKACARL (65 aa)) directs the protein to the mitochondrion. PPR repeat units lie at residues 86 to 116 (DVFV…MPER), 117 to 151 (DATT…EITP), 152 to 186 (DSVT…GVDV), 187 to 217 (QVTV…IDRG), 220 to 254 (TVVS…EFKP), 255 to 289 (DLST…GTDQ), 290 to 320 (DIEA…MTSR), 321 to 355 (TCVS…GEKP), 356 to 390 (DLVT…GCKR), 392 to 422 (NVMI…TPEK), 423 to 457 (TVVT…DYKP), 458 to 488 (NHIT…MKQV), and 494 to 524 (GLDH…MSAK). Residues 529–604 (IWGALLNACK…YPGESVIQVN (76 aa)) form a type E motif region. Positions 605–635 (GKNHSFTVGEHGHVENEVIYFTLNGLSLFAK) are type E(+) motif.

Belongs to the PPR family. PCMP-E subfamily.

The protein localises to the mitochondrion. This Arabidopsis thaliana (Mouse-ear cress) protein is Pentatricopeptide repeat-containing protein At4g19191, mitochondrial (PCMP-E1).